The chain runs to 380 residues: MLKRCGRRLLLALAGALLACLLVLTADPPPPPVPAERGRRALRSLAGPSGVATAPGLEAAAAAAPGAPVREVHSLSEYFSLLTRSRRDVGPPPGGAPRPADGPPRPLAEPLAPRDVFIAVKTTKKFHRARLDLLLETWISRHEEMTFIFTDGEDEALARRTGHVVNTNCSAAHSRQALSCKMAVEYDRFIESGRKWFCHVDDDNYVNVRALLRLLGSYPHTQDVYLGKPSLDRPIQATERVSENKVRPVHFWFATGGAGFCISRGLALKMSPWASGGHFMSTAERIRLPDDCTIGYIVEALLGVPLVRCGLFHSHLENLQQVPASELHEQVTLSYGMFENKRNSVHIKGPFSVEADPSRFRSVHCHLYPDTSWCPRSAIF.

At 1–8 (MLKRCGRR) the chain is on the cytoplasmic side. A helical; Signal-anchor for type II membrane protein membrane pass occupies residues 9–29 (LLLALAGALLACLLVLTADPP). The Lumenal portion of the chain corresponds to 30 to 380 (PPPVPAERGR…TSWCPRSAIF (351 aa)). Positions 85 to 110 (SRRDVGPPPGGAPRPADGPPRPLAEP) are disordered. Residues 90–107 (GPPPGGAPRPADGPPRPL) show a composition bias toward pro residues. Arg130 is a binding site for substrate. Asn168 carries N-linked (GlcNAc...) asparagine glycosylation. 2 disulfide bridges follow: Cys169-Cys180 and Cys198-Cys261. Asp202 serves as a coordination point for substrate. Asp203 provides a ligand contact to Mn(2+). The active site involves Asp291. His315 provides a ligand contact to Mn(2+). A disulfide bridge connects residues Cys365 and Cys374.

It belongs to the glycosyltransferase 31 family. The cofactor is Mn(2+). Requires Co(2+) as cofactor. Post-translationally, a soluble form may be derived from the membrane form by proteolytic processing.

The protein resides in the golgi apparatus. Its subcellular location is the golgi apparatus membrane. The catalysed reaction is 3-O-(alpha-L-fucosyl)-L-threonyl-[EGF-like domain protein] + UDP-N-acetyl-alpha-D-glucosamine = 3-O-(N-acetyl-beta-D-glucosaminyl-(1-&gt;3)-alpha-L-fucosyl)-L-threonyl-[EGF-like domain protein] + UDP + H(+). It carries out the reaction 3-O-(alpha-L-fucosyl)-L-seryl-[EGF-like domain protein] + UDP-N-acetyl-alpha-D-glucosamine = 3-O-(N-acetyl-beta-D-glucosaminyl-(1-&gt;3)-alpha-L-fucosyl)-L-seryl-[EGF-like domain protein] + UDP + H(+). Its function is as follows. Glycosyltransferase that initiates the elongation of O-linked fucose residues attached to EGF-like repeats in the extracellular domain of Notch molecules. Modulates NOTCH1 activity by modifying O-fucose residues at specific EGF-like domains resulting in inhibition of NOTCH1 activation by JAG1 and enhancement of NOTCH1 activation by DLL1 via an increase in its binding to DLL1. Decreases the binding of JAG1 to NOTCH2 but not that of DLL1. Essential mediator of somite segmentation and patterning. In Bos taurus (Bovine), this protein is Beta-1,3-N-acetylglucosaminyltransferase lunatic fringe (LFNG).